A 478-amino-acid polypeptide reads, in one-letter code: Kynureninase (478 aa).

Residues L138, T139, 166–169 (FPSD), D252, H255, and Y277 contribute to the pyridoxal 5'-phosphate site. Residue K278 is modified to N6-(pyridoxal phosphate)lysine. The pyridoxal 5'-phosphate site is built by W315 and N343.

Belongs to the kynureninase family. Homodimer. The cofactor is pyridoxal 5'-phosphate.

Its subcellular location is the cytoplasm. The enzyme catalyses L-kynurenine + H2O = anthranilate + L-alanine + H(+). It carries out the reaction 3-hydroxy-L-kynurenine + H2O = 3-hydroxyanthranilate + L-alanine + H(+). The protein operates within amino-acid degradation; L-kynurenine degradation; L-alanine and anthranilate from L-kynurenine: step 1/1. It participates in cofactor biosynthesis; NAD(+) biosynthesis; quinolinate from L-kynurenine: step 2/3. Functionally, catalyzes the cleavage of L-kynurenine (L-Kyn) and L-3-hydroxykynurenine (L-3OHKyn) into anthranilic acid (AA) and 3-hydroxyanthranilic acid (3-OHAA), respectively. The sequence is that of Kynureninase from Coccidioides immitis (strain RS) (Valley fever fungus).